The sequence spans 91 residues: MNKAELITSMAEKSKLTKKDAELALKALIESVEEALEKGEKVQLVGFGTFETRERAAREGRNPRTKEVINIPATTVPVFKAGKEFKDKVNK.

The protein belongs to the bacterial histone-like protein family.

Functionally, histone-like DNA-binding protein which is capable of wrapping DNA to stabilize it, and thus to prevent its denaturation under extreme environmental conditions. The polypeptide is DNA-binding protein HU (hup) (Clostridium pasteurianum).